A 20-amino-acid chain; its full sequence is Collagenolytic protease 36 kDa A (20 aa).

A Peptidase S1 domain is found at 1–20; that stretch reads IVGGTEVTPGEIPYQLSLQD. A disordered region spans residues 1-20; sequence IVGGTEVTPGEIPYQLSLQD.

This sequence belongs to the peptidase S1 family.

The catalysed reaction is Hydrolysis of proteins, with broad specificity for peptide bonds. Native collagen is cleaved about 75% of the length of the molecule from the N-terminus. Low activity on small molecule substrates of both trypsin and chymotrypsin.. Functionally, this enzyme is a serine protease capable of degrading the native triple helix of collagen. This is Collagenolytic protease 36 kDa A from Paralithodes camtschaticus (Red king crab).